A 253-amino-acid chain; its full sequence is N-acetylmuramoyl-L-alanine amidase CwlM (253 aa).

The 169-residue stretch at 4–172 folds into the MurNAc-LAA domain; the sequence is IFIDPGHGGS…IARGHANGLA (169 aa). Positions 179–253 constitute an SPOR domain; the sequence is KNAAALYKVQ…AEFDTFIYQE (75 aa). Repeat copies occupy residues 184-219 and 220-253. The interval 184–253 is 2 X 35 AA approximate tandem repeats; that stretch reads LYKVQIAAFR…AEFDTFIYQE (70 aa).

The protein belongs to the N-acetylmuramoyl-L-alanine amidase 3 family.

The protein localises to the secreted. The enzyme catalyses Hydrolyzes the link between N-acetylmuramoyl residues and L-amino acid residues in certain cell-wall glycopeptides.. Hydrolyzes the cell wall of M.luteus more efficiently than that of B.licheniformis and B.subtilis. The C-terminal region, including the repeats, determines substrate specificity. This Bacillus licheniformis protein is N-acetylmuramoyl-L-alanine amidase CwlM (cwlM).